The chain runs to 333 residues: ADP-L-glycero-D-manno-heptose-6-epimerase (333 aa).

NADP(+) contacts are provided by residues 11 to 12, 32 to 33, Lys39, Lys54, 76 to 80, and Asn93; these read FI, DN, and QGACS. The Proton acceptor role is filled by Tyr140. An NADP(+)-binding site is contributed by Lys144. Asn170 is a substrate binding site. NADP(+) contacts are provided by Val171 and Lys179. Lys179 acts as the Proton acceptor in catalysis. Substrate is bound by residues Arg181, His188, 202 to 205, Arg215, and Tyr294; that span reads FGGW.

It belongs to the NAD(P)-dependent epimerase/dehydratase family. HldD subfamily. In terms of assembly, homopentamer. NADP(+) is required as a cofactor.

It carries out the reaction ADP-D-glycero-beta-D-manno-heptose = ADP-L-glycero-beta-D-manno-heptose. Its pathway is nucleotide-sugar biosynthesis; ADP-L-glycero-beta-D-manno-heptose biosynthesis; ADP-L-glycero-beta-D-manno-heptose from D-glycero-beta-D-manno-heptose 7-phosphate: step 4/4. The protein operates within bacterial outer membrane biogenesis; LPS core biosynthesis. In terms of biological role, catalyzes the interconversion between ADP-D-glycero-beta-D-manno-heptose and ADP-L-glycero-beta-D-manno-heptose via an epimerization at carbon 6 of the heptose. The chain is ADP-L-glycero-D-manno-heptose-6-epimerase from Chromobacterium violaceum (strain ATCC 12472 / DSM 30191 / JCM 1249 / CCUG 213 / NBRC 12614 / NCIMB 9131 / NCTC 9757 / MK).